The following is a 43-amino-acid chain: Potassium channel toxin gamma-KTx 3.2 (43 aa).

4 disulfide bridges follow: Cys5-Cys23, Cys11-Cys34, Cys20-Cys39, and Cys24-Cys41.

Belongs to the ergtoxin family. Gamma-KTx 3 subfamily. As to expression, expressed by the venom gland.

It is found in the secreted. Functionally, blocks Kv11/ERG potassium channels. The polypeptide is Potassium channel toxin gamma-KTx 3.2 (Centruroides elegans (Bark scorpion)).